Here is an 82-residue protein sequence, read N- to C-terminus: Cytochrome b559 subunit alpha (82 aa).

A helical transmembrane segment spans residues 22-36 (VIHAITLPSIFLAGF). H24 contacts heme.

This sequence belongs to the PsbE/PsbF family. In terms of assembly, heterodimer of an alpha subunit and a beta subunit. PSII is composed of 1 copy each of membrane proteins PsbA, PsbB, PsbC, PsbD, PsbE, PsbF, PsbH, PsbI, PsbJ, PsbK, PsbL, PsbM, PsbT, PsbX, PsbY, PsbZ, Psb30/Ycf12, peripheral proteins PsbO, CyanoQ (PsbQ), PsbU, PsbV and a large number of cofactors. It forms dimeric complexes. The cofactor is heme b.

The protein resides in the cellular thylakoid membrane. This b-type cytochrome is tightly associated with the reaction center of photosystem II (PSII). PSII is a light-driven water:plastoquinone oxidoreductase that uses light energy to abstract electrons from H(2)O, generating O(2) and a proton gradient subsequently used for ATP formation. It consists of a core antenna complex that captures photons, and an electron transfer chain that converts photonic excitation into a charge separation. This chain is Cytochrome b559 subunit alpha, found in Synechococcus sp. (strain WH7803).